Consider the following 273-residue polypeptide: Zinc finger protein AZF2 (273 aa).

The disordered stretch occupies residues Leu33–Asp64. Over residues Lys34 to Ser43 the composition is skewed to basic residues. A compositionally biased stretch (low complexity) spans His44–Pro54. 2 C2H2-type zinc fingers span residues Tyr106–His128 and His165–His187. A disordered region spans residues Gly195–Glu215. A compositionally biased stretch (low complexity) spans Lys201–Val213.

Expressed in roots, radicles, cotyledons, hypocotyls, leaf veins, stems, sepals, petals, stamens, placenta, funiculi and maturated seeds.

The protein resides in the nucleus. Transcriptional repressor involved in the inhibition of plant growth under abiotic stress conditions. Can repress the expression of various genes, including osmotic stress and abscisic acid-repressive genes and auxin-inducible genes, by binding to their promoter regions in a DNA sequence-specific manner. Acts as a negative regulator of abscisic acid (ABA) signaling during seed germination. Probably involved in jasmonate (JA) early signaling response. May regulate the expression of the JA biosynthesis gene LOX3 and control the expression of TIFY10A/JAZ1, a key repressor in the JA signaling cascade. May act as a positive regulator of leaf senescence. Has been identified as a suppressor of the deficiency of yeast snf4 mutant to grow on non-fermentable carbon source. The chain is Zinc finger protein AZF2 (AZF2) from Arabidopsis thaliana (Mouse-ear cress).